The primary structure comprises 95 residues: Aspartyl/glutamyl-tRNA(Asn/Gln) amidotransferase subunit C (95 aa).

This sequence belongs to the GatC family. Heterotrimer of A, B and C subunits.

It carries out the reaction L-glutamyl-tRNA(Gln) + L-glutamine + ATP + H2O = L-glutaminyl-tRNA(Gln) + L-glutamate + ADP + phosphate + H(+). The catalysed reaction is L-aspartyl-tRNA(Asn) + L-glutamine + ATP + H2O = L-asparaginyl-tRNA(Asn) + L-glutamate + ADP + phosphate + 2 H(+). Its function is as follows. Allows the formation of correctly charged Asn-tRNA(Asn) or Gln-tRNA(Gln) through the transamidation of misacylated Asp-tRNA(Asn) or Glu-tRNA(Gln) in organisms which lack either or both of asparaginyl-tRNA or glutaminyl-tRNA synthetases. The reaction takes place in the presence of glutamine and ATP through an activated phospho-Asp-tRNA(Asn) or phospho-Glu-tRNA(Gln). The chain is Aspartyl/glutamyl-tRNA(Asn/Gln) amidotransferase subunit C from Cytophaga hutchinsonii (strain ATCC 33406 / DSM 1761 / CIP 103989 / NBRC 15051 / NCIMB 9469 / D465).